The following is a 388-amino-acid chain: MACYSPRCDSPYPYADWDDCESVSSLGSFGCDYDHHEEASFQDPLAVGDDDVFEEPERVHGPIVDICKVDRMSEEEERMAIATRKAKEVAKELSETMSGKLRWLSDFTCDKPGPKRRKKKGLSMVDYPTLGSEAPAGSRIKMSKIGKGCTLVMASGGTRVEGSHPLVREFNGEKPPKNVGRKSGPAWFGYLSAKNATDKKTGSKQSDKEVEDDWTFVSKKGKGIQPEDAKPQGVKHQHAIRRDDRHRHGMRGTRYGAPNYGYRYQQQQCPVQGQQSRGQWQRRHCEGEGQWTQRRPAQQQQRPAQQQQRPAQQQQRPAQQQQRPAQQQQRPAQQQQRPAQQQQRPAQQPPQKPLRKRKPPPTNQRIVKPQKPKTPEPQPPQQDWFDSV.

The stretch at 68–96 forms a coiled coil; the sequence is KVDRMSEEEERMAIATRKAKEVAKELSET. Residues 162-388 are disordered; sequence GSHPLVREFN…PPQQDWFDSV (227 aa). Basic and acidic residues-rich tracts occupy residues 166 to 176 and 196 to 208; these read LVREFNGEKPP and ATDK…QSDK. Residues 233–251 are compositionally biased toward basic residues; the sequence is GVKHQHAIRRDDRHRHGMR. 2 stretches are compositionally biased toward low complexity: residues 265–279 and 293–346; these read QQQQ…SRGQ and QRRP…QRPA.

This is an uncharacterized protein from Frog virus 3 (isolate Goorha) (FV-3).